A 292-amino-acid chain; its full sequence is Probable 2-(5''-triphosphoribosyl)-3'-dephosphocoenzyme-A synthase (292 aa).

Belongs to the CitG/MdcB family.

The catalysed reaction is 3'-dephospho-CoA + ATP = 2'-(5''-triphospho-alpha-D-ribosyl)-3'-dephospho-CoA + adenine. This is Probable 2-(5''-triphosphoribosyl)-3'-dephosphocoenzyme-A synthase from Shigella boydii serotype 18 (strain CDC 3083-94 / BS512).